Reading from the N-terminus, the 1356-residue chain is Probable aldehyde oxidase 3 (1356 aa).

Positions 10 to 97 constitute a 2Fe-2S ferredoxin-type domain; the sequence is RAVVVAVNGE…HCAVTTSEGI (88 aa). Positions 49, 54, 57, and 79 each coordinate [2Fe-2S] cluster. One can recognise an FAD-binding PCMH-type domain in the interval 245-437; the sequence is VVVTGDGWFH…TFQTFRAAPR (193 aa). Residues 552-576 are disordered; it reads NGSFTNGTANGIVDSSPEKHSNVDS.

It belongs to the xanthine dehydrogenase family. As to quaternary structure, aldehyde oxidases (AO) are homodimers and heterodimers of AO subunits. [2Fe-2S] cluster is required as a cofactor. Requires FAD as cofactor. It depends on Mo-molybdopterin as a cofactor.

The catalysed reaction is an aldehyde + O2 + H2O = a carboxylate + H2O2 + H(+). The sequence is that of Probable aldehyde oxidase 3 from Oryza sativa subsp. japonica (Rice).